A 206-amino-acid polypeptide reads, in one-letter code: Small ribosomal subunit protein uS4A (206 aa).

Residues 98 to 164 (MRLDNVVYKL…EKFKTFAENP (67 aa)) enclose the S4 RNA-binding domain.

The protein belongs to the universal ribosomal protein uS4 family. Part of the 30S ribosomal subunit. Contacts protein S5. The interaction surface between S4 and S5 is involved in control of translational fidelity.

In terms of biological role, one of the primary rRNA binding proteins, it binds directly to 16S rRNA where it nucleates assembly of the body of the 30S subunit. Its function is as follows. With S5 and S12 plays an important role in translational accuracy. The polypeptide is Small ribosomal subunit protein uS4A (Clostridium novyi (strain NT)).